The following is a 549-amino-acid chain: Glucose-6-phosphate isomerase (549 aa).

Lys80, Lys228, and Lys234 each carry N6-acetyllysine. Glu355 (proton donor) is an active-site residue. Catalysis depends on residues His386 and Lys514.

The protein belongs to the GPI family.

It is found in the cytoplasm. The enzyme catalyses alpha-D-glucose 6-phosphate = beta-D-fructose 6-phosphate. Its pathway is carbohydrate biosynthesis; gluconeogenesis. It functions in the pathway carbohydrate degradation; glycolysis; D-glyceraldehyde 3-phosphate and glycerone phosphate from D-glucose: step 2/4. Catalyzes the reversible isomerization of glucose-6-phosphate to fructose-6-phosphate. The chain is Glucose-6-phosphate isomerase from Escherichia fergusonii (strain ATCC 35469 / DSM 13698 / CCUG 18766 / IAM 14443 / JCM 21226 / LMG 7866 / NBRC 102419 / NCTC 12128 / CDC 0568-73).